A 95-amino-acid chain; its full sequence is Citrate lyase acyl carrier protein (95 aa).

Ser-14 carries the post-translational modification O-(phosphoribosyl dephospho-coenzyme A)serine.

This sequence belongs to the CitD family. As to quaternary structure, oligomer with a subunit composition of (alpha,beta,gamma)6.

It is found in the cytoplasm. In terms of biological role, covalent carrier of the coenzyme of citrate lyase. The sequence is that of Citrate lyase acyl carrier protein from Haemophilus ducreyi (strain 35000HP / ATCC 700724).